Reading from the N-terminus, the 245-residue chain is NAD-dependent protein deacetylase (245 aa).

The 245-residue stretch at 1–245 folds into the Deacetylase sirtuin-type domain; sequence MIFVQQFEEV…EFVEGLSSIK (245 aa). Residues Ala-26, Thr-30, Phe-37, Arg-38, Gln-105, Ile-107, Asp-108, and His-123 each contribute to the NAD(+) site. Phe-37 is a binding site for nicotinamide. Residues Ile-107 and Asp-108 each coordinate nicotinamide. The active-site Proton acceptor is the His-123. Cys-131, Cys-134, Cys-151, and Cys-154 together coordinate Zn(2+). The NAD(+) site is built by Thr-190, Ser-191, Asn-216, and Ile-234.

This sequence belongs to the sirtuin family. Class U subfamily. The cofactor is Zn(2+).

It localises to the cytoplasm. It carries out the reaction N(6)-acetyl-L-lysyl-[protein] + NAD(+) + H2O = 2''-O-acetyl-ADP-D-ribose + nicotinamide + L-lysyl-[protein]. In terms of biological role, NAD-dependent protein deacetylase which modulates the activities of several enzymes which are inactive in their acetylated form. In Bacillus thuringiensis subsp. konkukian (strain 97-27), this protein is NAD-dependent protein deacetylase.